A 495-amino-acid polypeptide reads, in one-letter code: MPERRTVALVTLGCARNEVDSEELAGRLEADGWQLVEDAEDADVAVVNTCGFVEAAKKDSVDALLEANDLKGHGRTQAVVAVGCMAERYGKELAEALPEADGVLGFDDYTNISDRLQTILNGGIHAAHTPRDRRKLLPISPAERQSAGADVALPGHGAPEGLPEDLPEGLAPESGPRAPLRRRLDGSPVASVKLASGCDRRCSFCAIPSFRGSFISRRPSDVLGETRWLAEQGVKEVMLVSENNTSYGKDLGDIRLLETLLPELAEVDGIERVRVSYLQPAEMRPGLIDVLTSTPKIAPYFDLSFQHSAPDVLRAMRRFGDTDRFLELLDTIRSKAPQAGVRSNFIVGFPGETEADLAELERFLTGARLDAIGVFGYSDEEGTEAATYGHKLDEDVVAARLARVSRLAEELVAQRAEERVGETVHVLVESIDDEEGAVGRAEHQAPETDGQVLFTSGEGLTVGRMVEAKVVGTEGVDLVAEPLPGSLVCTEEAGR.

In terms of domain architecture, MTTase N-terminal spans 5 to 121 (RTVALVTLGC…ISDRLQTILN (117 aa)). Residues cysteine 14, cysteine 50, and cysteine 84 each contribute to the [4Fe-4S] cluster site. Residues 145–183 (QSAGADVALPGHGAPEGLPEDLPEGLAPESGPRAPLRRR) form a disordered region. The Radical SAM core domain occupies 184 to 415 (LDGSPVASVK…RLAEELVAQR (232 aa)). [4Fe-4S] cluster contacts are provided by cysteine 198, cysteine 202, and cysteine 205. The 68-residue stretch at 417–484 (EERVGETVHV…GVDLVAEPLP (68 aa)) folds into the TRAM domain.

Belongs to the methylthiotransferase family. RimO subfamily. The cofactor is [4Fe-4S] cluster.

Its subcellular location is the cytoplasm. It carries out the reaction L-aspartate(89)-[ribosomal protein uS12]-hydrogen + (sulfur carrier)-SH + AH2 + 2 S-adenosyl-L-methionine = 3-methylsulfanyl-L-aspartate(89)-[ribosomal protein uS12]-hydrogen + (sulfur carrier)-H + 5'-deoxyadenosine + L-methionine + A + S-adenosyl-L-homocysteine + 2 H(+). Its function is as follows. Catalyzes the methylthiolation of an aspartic acid residue of ribosomal protein uS12. This chain is Ribosomal protein uS12 methylthiotransferase RimO, found in Streptomyces avermitilis (strain ATCC 31267 / DSM 46492 / JCM 5070 / NBRC 14893 / NCIMB 12804 / NRRL 8165 / MA-4680).